Reading from the N-terminus, the 78-residue chain is D-alanyl carrier protein (78 aa).

Residues 1-78 (MNIQETVLNI…QIIQQVEALQ (78 aa)) form the Carrier domain. Residue serine 36 is modified to O-(pantetheine 4'-phosphoryl)serine.

This sequence belongs to the DltC family. 4'-phosphopantetheine is transferred from CoA to a specific serine of apo-DCP.

The protein localises to the cytoplasm. The protein operates within cell wall biogenesis; lipoteichoic acid biosynthesis. Carrier protein involved in the D-alanylation of lipoteichoic acid (LTA). The loading of thioester-linked D-alanine onto DltC is catalyzed by D-alanine--D-alanyl carrier protein ligase DltA. The DltC-carried D-alanyl group is further transferred to cell membrane phosphatidylglycerol (PG) by forming an ester bond, probably catalyzed by DltD. D-alanylation of LTA plays an important role in modulating the properties of the cell wall in Gram-positive bacteria, influencing the net charge of the cell wall. The chain is D-alanyl carrier protein from Enterococcus faecalis (strain ATCC 700802 / V583).